A 175-amino-acid chain; its full sequence is Adenine phosphoribosyltransferase (175 aa).

Belongs to the purine/pyrimidine phosphoribosyltransferase family. In terms of assembly, homodimer.

It is found in the cytoplasm. It catalyses the reaction AMP + diphosphate = 5-phospho-alpha-D-ribose 1-diphosphate + adenine. It participates in purine metabolism; AMP biosynthesis via salvage pathway; AMP from adenine: step 1/1. Catalyzes a salvage reaction resulting in the formation of AMP, that is energically less costly than de novo synthesis. This is Adenine phosphoribosyltransferase from Francisella philomiragia subsp. philomiragia (strain ATCC 25017 / CCUG 19701 / FSC 153 / O#319-036).